The primary structure comprises 513 residues: Histidine ammonia-lyase (513 aa).

The segment at residues 145–147 (ASG) is a cross-link (5-imidazolinone (Ala-Gly)). A 2,3-didehydroalanine (Ser) modification is found at Ser146.

The protein belongs to the PAL/histidase family. Contains an active site 4-methylidene-imidazol-5-one (MIO), which is formed autocatalytically by cyclization and dehydration of residues Ala-Ser-Gly.

The protein localises to the cytoplasm. It carries out the reaction L-histidine = trans-urocanate + NH4(+). The protein operates within amino-acid degradation; L-histidine degradation into L-glutamate; N-formimidoyl-L-glutamate from L-histidine: step 1/3. In Vibrio vulnificus (strain CMCP6), this protein is Histidine ammonia-lyase.